The following is a 172-amino-acid chain: RNA pyrophosphohydrolase (172 aa).

The Nudix hydrolase domain occupies 6-149 (GYRLNVGIVI…KRDVYRRAMK (144 aa)). Positions 38 to 59 (GGIDEGETPEQAMYRELYEEVG) match the Nudix box motif.

The protein belongs to the Nudix hydrolase family. RppH subfamily. A divalent metal cation is required as a cofactor.

Accelerates the degradation of transcripts by removing pyrophosphate from the 5'-end of triphosphorylated RNA, leading to a more labile monophosphorylated state that can stimulate subsequent ribonuclease cleavage. The sequence is that of RNA pyrophosphohydrolase from Vibrio atlanticus (strain LGP32) (Vibrio splendidus (strain Mel32)).